The primary structure comprises 326 residues: MSANLKYLSLGILVFQTTSLVLTMRYSRTLKEEGPRYLSSTAVVVAELLKIMACILLVYKDSKCSLRALNRILHDEILNKPMETLKLAIPSGIYTLQNNLLYVALSNLDAATYQVTYQLKILTTALFSVSMLSKKLGVYQWLSLVILMTGVAFVQWPSDSQELNSKELSAGSQFVGLMAVLTACFSSGFAGVYFEKILKETKQSVWIRNIQLGFFGSIFGLMGVYVYDGELVSKNGFFQGYNRLTWIVVVLQALGGLVIAAVIKYADNILKGFATSLSIILSTLISYFWLQDFVPTSVFFLGAILVITATFLYGYDPKPAGNPTKA.

Helical transmembrane passes span N4 to M24, L38 to V58, L136 to W156, F174 to F194, L212 to V232, L244 to K264, I269 to W289, and F293 to Y313.

This sequence belongs to the nucleotide-sugar transporter family. SLC35A subfamily. Interacts with SLC35A2; the interaction is reduced in the presence of SLC35A4. Found in a complex with SLC35A2 and SLC35A4. Interacts with MGAT4B. Post-translationally, O-Glcnacylation regulates the stability of SLC35A3 and the specific complex formation with MGAT4B.

Its subcellular location is the golgi apparatus membrane. The catalysed reaction is UMP(out) + UDP-N-acetyl-alpha-D-glucosamine(in) = UMP(in) + UDP-N-acetyl-alpha-D-glucosamine(out). Functionally, transports diphosphate-N-acetylglucosamine (UDP-GlcNAc) from the cytosol into the lumen of the Golgi apparatus, functioning as an antiporter that exchanges UDP-N-acetyl-alpha-D-glucosamine for UMP. May supply UDP-GlcNAc as substrate for Golgi-resident glycosyltransferases that generate highly branched, multiantennary complex N-glycans and keratan sulfate. However, the exact role of SLC35A3 still needs to be elucidated, it could be a member of a catalytically more efficient multiprotein complex rather than function independently as a single transporter. This is UDP-N-acetylglucosamine transporter (SLC35A3) from Bos taurus (Bovine).